A 166-amino-acid polypeptide reads, in one-letter code: Crossover junction endodeoxyribonuclease RuvC (166 aa).

Active-site residues include Asp7, Glu68, and Asp141. The Mg(2+) site is built by Asp7, Glu68, and Asp141.

It belongs to the RuvC family. As to quaternary structure, homodimer which binds Holliday junction (HJ) DNA. The HJ becomes 2-fold symmetrical on binding to RuvC with unstacked arms; it has a different conformation from HJ DNA in complex with RuvA. In the full resolvosome a probable DNA-RuvA(4)-RuvB(12)-RuvC(2) complex forms which resolves the HJ. It depends on Mg(2+) as a cofactor.

It is found in the cytoplasm. The catalysed reaction is Endonucleolytic cleavage at a junction such as a reciprocal single-stranded crossover between two homologous DNA duplexes (Holliday junction).. Its function is as follows. The RuvA-RuvB-RuvC complex processes Holliday junction (HJ) DNA during genetic recombination and DNA repair. Endonuclease that resolves HJ intermediates. Cleaves cruciform DNA by making single-stranded nicks across the HJ at symmetrical positions within the homologous arms, yielding a 5'-phosphate and a 3'-hydroxyl group; requires a central core of homology in the junction. The consensus cleavage sequence is 5'-(A/T)TT(C/G)-3'. Cleavage occurs on the 3'-side of the TT dinucleotide at the point of strand exchange. HJ branch migration catalyzed by RuvA-RuvB allows RuvC to scan DNA until it finds its consensus sequence, where it cleaves and resolves the cruciform DNA. This chain is Crossover junction endodeoxyribonuclease RuvC, found in Koribacter versatilis (strain Ellin345).